A 224-amino-acid chain; its full sequence is 2-C-methyl-D-erythritol 4-phosphate cytidylyltransferase (224 aa).

This sequence belongs to the IspD/TarI cytidylyltransferase family. IspD subfamily.

The catalysed reaction is 2-C-methyl-D-erythritol 4-phosphate + CTP + H(+) = 4-CDP-2-C-methyl-D-erythritol + diphosphate. It functions in the pathway isoprenoid biosynthesis; isopentenyl diphosphate biosynthesis via DXP pathway; isopentenyl diphosphate from 1-deoxy-D-xylulose 5-phosphate: step 2/6. In terms of biological role, catalyzes the formation of 4-diphosphocytidyl-2-C-methyl-D-erythritol from CTP and 2-C-methyl-D-erythritol 4-phosphate (MEP). The protein is 2-C-methyl-D-erythritol 4-phosphate cytidylyltransferase of Saccharopolyspora erythraea (strain ATCC 11635 / DSM 40517 / JCM 4748 / NBRC 13426 / NCIMB 8594 / NRRL 2338).